Here is a 413-residue protein sequence, read N- to C-terminus: 4-hydroxy-3-methylbut-2-en-1-yl diphosphate synthase (flavodoxin) (413 aa).

[4Fe-4S] cluster contacts are provided by Cys-298, Cys-301, Cys-344, and Glu-351.

It belongs to the IspG family. It depends on [4Fe-4S] cluster as a cofactor.

It carries out the reaction (2E)-4-hydroxy-3-methylbut-2-enyl diphosphate + oxidized [flavodoxin] + H2O + 2 H(+) = 2-C-methyl-D-erythritol 2,4-cyclic diphosphate + reduced [flavodoxin]. It participates in isoprenoid biosynthesis; isopentenyl diphosphate biosynthesis via DXP pathway; isopentenyl diphosphate from 1-deoxy-D-xylulose 5-phosphate: step 5/6. In terms of biological role, converts 2C-methyl-D-erythritol 2,4-cyclodiphosphate (ME-2,4cPP) into 1-hydroxy-2-methyl-2-(E)-butenyl 4-diphosphate. The chain is 4-hydroxy-3-methylbut-2-en-1-yl diphosphate synthase (flavodoxin) from Koribacter versatilis (strain Ellin345).